Consider the following 370-residue polypeptide: Cytochrome b (370 aa).

The next 4 helical transmembrane spans lie at 25–45 (FGSM…FLAI), 69–90 (WIMQ…YTHI), 105–125 (WLSG…GYVL), and 170–190 (FFAL…IHIV). 2 residues coordinate heme b: His-75 and His-89. 2 residues coordinate heme b: His-174 and His-188. His-193 lines the a ubiquinone pocket. 4 helical membrane-spanning segments follow: residues 218 to 238 (YKDM…MSFM), 280 to 300 (LGGT…PFTH), 312 to 332 (LTQI…WTAT), and 339 to 358 (FITI…IINP).

Belongs to the cytochrome b family. As to quaternary structure, the cytochrome bc1 complex contains 3 respiratory subunits (MT-CYB, CYC1 and UQCRFS1), 2 core proteins (UQCRC1 and UQCRC2) and probably 6 low-molecular weight proteins. Heme b serves as cofactor.

The protein resides in the mitochondrion inner membrane. In terms of biological role, component of the ubiquinol-cytochrome c reductase complex (complex III or cytochrome b-c1 complex) that is part of the mitochondrial respiratory chain. The b-c1 complex mediates electron transfer from ubiquinol to cytochrome c. Contributes to the generation of a proton gradient across the mitochondrial membrane that is then used for ATP synthesis. The protein is Cytochrome b (MT-CYB) of Micropechis ikaheca (New Guinean small-eyed snake).